Consider the following 720-residue polypeptide: TAL effector protein Rip19 (720 aa).

Disordered regions lie at residues 13–85 (SVSL…PSLV) and 175–205 (QAFA…PTFL). Positions 67 to 85 (PRRPLPVAPASAPPAPSLV) are enriched in pro residues. The Nuclear localization signal 1 signature appears at 185–191 (RSARARR). The stretch at 286 to 320 (LTRAHIVDIARQRSGDLALQALLPVATALTAAPLR) is one Cryptic repeat -1 repeat. A Cryptic repeat 0 repeat occupies 321–354 (LSASQIATVAQYGERPAIQALYRLRRKLTRAPLH). The stretch at 355–389 (LTPQQVVAIASHDGGKPALEAVWAKLPVLRGVPYA) is one Core repeat 1 repeat. A Cryptic repeat +1 repeat occupies 390 to 423 (LSTAQVVAIACISGQQALEAIEAHMPTLRQAPHS). A Cryptic repeat +2 repeat occupies 424 to 457 (LSPERVAAIACIGGRSAVEAVRQGLPVKAIRRIR). 3 consecutive short sequence motifs (nuclear localization signal) follow at residues 455 to 458 (RIRR), 583 to 586 (HRKR), and 620 to 623 (RRKR). Positions 571–611 (SPGMAGQSACSPHRKRPAETAIAPRSIRRRPNNAGQPSEPW) are disordered.

This sequence belongs to the transcription activator-like effector (TALE) family. RipTAL/RTL subfamily.

The protein resides in the secreted. Its subcellular location is the host nucleus. Its function is as follows. Does not activate plant gene transcription, because it has too few core repeats. The polypeptide is TAL effector protein Rip19 (Ralstonia solanacearum (Pseudomonas solanacearum)).